The chain runs to 67 residues: Large ribosomal subunit protein uL29 (67 aa).

This sequence belongs to the universal ribosomal protein uL29 family.

This chain is Large ribosomal subunit protein uL29, found in Pelotomaculum thermopropionicum (strain DSM 13744 / JCM 10971 / SI).